The chain runs to 679 residues: FAST kinase domain-containing protein 2, mitochondrial (679 aa).

Residues Ser113 and Ser126 each carry the phosphoserine modification. An RAP domain is found at 607 to 664 (VAVLCVPKSAYCLNSNHLRGLMAMKIRHLNVMGFHVILIHNWELKKLKMEDAVTFVRK).

Belongs to the FAST kinase family. As to quaternary structure, monomer. Found in a complex with GRSF1, DDX28, DHX30 and FASTKD5. Associates with the 16S mitochondrial rRNA (16S mt-rRNA). Forms a regulatory protein-RNA complex, consisting of RCC1L, NGRN, RPUSD3, RPUSD4, TRUB2, FASTKD2 and 16S mt-rRNA.

It localises to the mitochondrion matrix. It is found in the mitochondrion nucleoid. In terms of biological role, plays an important role in assembly of the mitochondrial large ribosomal subunit. As a component of a functional protein-RNA module, consisting of RCC1L, NGRN, RPUSD3, RPUSD4, TRUB2, FASTKD2 and 16S mitochondrial ribosomal RNA (16S mt-rRNA), controls 16S mt-rRNA abundance and is required for intra-mitochondrial translation. May play a role in mitochondrial apoptosis. The chain is FAST kinase domain-containing protein 2, mitochondrial (Fastkd2) from Rattus norvegicus (Rat).